Consider the following 292-residue polypeptide: Elongation factor Ts (292 aa).

An involved in Mg(2+) ion dislocation from EF-Tu region spans residues 82 to 85 (TDFV).

This sequence belongs to the EF-Ts family.

It is found in the cytoplasm. Functionally, associates with the EF-Tu.GDP complex and induces the exchange of GDP to GTP. It remains bound to the aminoacyl-tRNA.EF-Tu.GTP complex up to the GTP hydrolysis stage on the ribosome. The polypeptide is Elongation factor Ts (Legionella pneumophila (strain Lens)).